We begin with the raw amino-acid sequence, 215 residues long: MOB kinase activator-like 1A (215 aa).

A disordered region spans residues 1–29; that stretch reads MSLFGLGSRNQKTFRPKKSAPTGSKGAQL. Residues Cys80, Cys85, His162, and His167 each contribute to the Zn(2+) site.

Belongs to the MOB1/phocein family. Isoform 1 is constitutively expressed. Isoform 2 is specifically expressed in flowers bud during sporogenesis and gametogenesis.

It localises to the cytoplasm. The protein localises to the cytoskeleton. It is found in the phragmoplast. The polypeptide is MOB kinase activator-like 1A (Medicago sativa subsp. falcata (Sickle medic)).